The chain runs to 342 residues: L-threonine 3-dehydrogenase (342 aa).

Cys38 is a binding site for Zn(2+). Active-site charge relay system residues include Thr40 and His43. Zn(2+)-binding residues include His63, Glu64, Cys93, Cys96, Cys99, and Cys107. NAD(+)-binding positions include Ile175, Asp195, Arg200, 262-264 (LGI), and 286-287 (IY).

The protein belongs to the zinc-containing alcohol dehydrogenase family. Homotetramer. Zn(2+) is required as a cofactor.

Its subcellular location is the cytoplasm. It carries out the reaction L-threonine + NAD(+) = (2S)-2-amino-3-oxobutanoate + NADH + H(+). Its pathway is amino-acid degradation; L-threonine degradation via oxydo-reductase pathway; glycine from L-threonine: step 1/2. Its function is as follows. Catalyzes the NAD(+)-dependent oxidation of L-threonine to 2-amino-3-ketobutyrate. In Aeromonas hydrophila subsp. hydrophila (strain ATCC 7966 / DSM 30187 / BCRC 13018 / CCUG 14551 / JCM 1027 / KCTC 2358 / NCIMB 9240 / NCTC 8049), this protein is L-threonine 3-dehydrogenase.